Consider the following 208-residue polypeptide: MASVGLQLLATVLAIIGWLGEIVICALPMWKVTAFIGNNIVTAQIFWEGLWMNCVQQSTGQMQCKVYDSMLALPQDLQAARALVVISIIVTFMGVFLTIAGGKCTNCIEDQDAKAKVVVAAGVFFLVGGILCLIPVCWSANSVIKDFYNPTLSDAQKRELGASLFIGWCASGLLLLGGALLCCQCPKNEGRAYSVKYSAPRSAPGAYV.

Helical transmembrane passes span 8–28 (LLAT…CALP), 82–102 (ALVV…IAGG), 117–137 (VVVA…IPVC), and 160–180 (LGAS…GGAL).

The protein belongs to the claudin family.

The protein resides in the cell membrane. Its subcellular location is the cell junction. It is found in the tight junction. Its function is as follows. Component of tight junction (TJ) strands. The sequence is that of Claudin-like protein ZF-A89 (cldnd) from Danio rerio (Zebrafish).